Reading from the N-terminus, the 343-residue chain is Heat-inducible transcription repressor HrcA (343 aa).

This sequence belongs to the HrcA family.

Negative regulator of class I heat shock genes (grpE-dnaK-dnaJ and groELS operons). Prevents heat-shock induction of these operons. The polypeptide is Heat-inducible transcription repressor HrcA (Bacillus velezensis (strain DSM 23117 / BGSC 10A6 / LMG 26770 / FZB42) (Bacillus amyloliquefaciens subsp. plantarum)).